A 209-amino-acid chain; its full sequence is Ribonuclease HII (209 aa).

The RNase H type-2 domain maps to 6–209; it reads SLEAGIDEAG…IKRMTNSRLF (204 aa). A divalent metal cation-binding residues include Asp12, Glu13, and Asp108.

It belongs to the RNase HII family. Mn(2+) is required as a cofactor. It depends on Mg(2+) as a cofactor.

Its subcellular location is the cytoplasm. The enzyme catalyses Endonucleolytic cleavage to 5'-phosphomonoester.. Its function is as follows. Endonuclease that specifically degrades the RNA of RNA-DNA hybrids. This Caldivirga maquilingensis (strain ATCC 700844 / DSM 13496 / JCM 10307 / IC-167) protein is Ribonuclease HII.